A 129-amino-acid chain; its full sequence is Histone H2A.J (129 aa).

Residues 1–22 form a disordered region; the sequence is MSGRGKQGGKVRAKAKSRSSRA. Residue serine 2 is modified to N-acetylserine. Position 2 is a phosphoserine (serine 2). Lysine 6 carries the N6-acetyllysine modification. A compositionally biased stretch (basic residues) spans 7-19; sequence QGGKVRAKAKSRS. An N6-lactoyllysine; alternate modification is found at lysine 10. Glycyl lysine isopeptide (Lys-Gly) (interchain with G-Cter in ubiquitin) cross-links involve residues lysine 14 and lysine 16. Glutamine 105 carries the N5-methylglutamine modification. Lysine 120 participates in a covalent cross-link: Glycyl lysine isopeptide (Lys-Gly) (interchain with G-Cter in ubiquitin).

It belongs to the histone H2A family. As to quaternary structure, the nucleosome is a histone octamer containing two molecules each of H2A, H2B, H3 and H4 assembled in one H3-H4 heterotetramer and two H2A-H2B heterodimers. The octamer wraps approximately 147 bp of DNA. In terms of processing, monoubiquitination of Lys-120 (H2AXK119ub) gives a specific tag for epigenetic transcriptional repression. Following DNA double-strand breaks (DSBs), it is ubiquitinated through 'Lys-63' linkage of ubiquitin moieties. Phosphorylation on Ser-2 is enhanced during mitosis. Phosphorylation on Ser-2 directly represses transcription.

The protein localises to the nucleus. It localises to the chromosome. Its function is as follows. Core component of nucleosome. Nucleosomes wrap and compact DNA into chromatin, limiting DNA accessibility to the cellular machineries which require DNA as a template. Histones thereby play a central role in transcription regulation, DNA repair, DNA replication and chromosomal stability. DNA accessibility is regulated via a complex set of post-translational modifications of histones, also called histone code, and nucleosome remodeling. This chain is Histone H2A.J (H2A-IX), found in Gallus gallus (Chicken).